The chain runs to 523 residues: Tyrosine-protein kinase transforming protein Src (523 aa).

The tract at residues 1 to 50 is disordered; sequence MGSSKSKPKDPSQRRRSLEPPDSTHHGGFPASQTPNKTAAPDTHRTPSRS. G2 carries N-myristoyl glycine; by host lipidation. The span at 7 to 25 shows a compositional bias: basic and acidic residues; sequence KPKDPSQRRRSLEPPDSTH. The region spanning 71 to 139 is the SH3 domain; that stretch reads TSPQRAGALA…PSNYVAPSDS (69 aa). One can recognise an SH2 domain in the interval 145–242; that stretch reads WYFGKITRRE…GLCHRLTNVC (98 aa). In terms of domain architecture, Protein kinase spans 264 to 514; that stretch reads LRLEVKLGQG…TFEYLQAQLL (251 aa). ATP-binding positions include 270 to 278 and K292; that span reads LGQGYFGEV. The active-site Proton acceptor is D383. Residue Y413 is modified to Phosphotyrosine; by autocatalysis.

This sequence belongs to the protein kinase superfamily. Tyr protein kinase family. SRC subfamily. In terms of assembly, homodimer. The phosphorylated form is termed pp60v-src.

The enzyme catalyses L-tyrosyl-[protein] + ATP = O-phospho-L-tyrosyl-[protein] + ADP + H(+). Its function is as follows. This phosphoprotein, required for both the initiation and the maintenance of neoplastic transformation, is a protein kinase that catalyzes the phosphorylation of tyrosine residues in vitro. This is Tyrosine-protein kinase transforming protein Src (V-SRC) from Gallus gallus (Chicken).